The chain runs to 457 residues: BAG family molecular chaperone regulator 4 (457 aa).

Positions 1-20 (MSALRRSGYGPSDGPSYGRY) are enriched in low complexity. A disordered region spans residues 1–104 (MSALRRSGYG…PYPGYNSNYW (104 aa)). At Ser-7 the chain carries Phosphoserine. Over residues 31 to 48 (HVPPPLYPPLRPEPPQPP) the composition is skewed to pro residues. Omega-N-methylarginine is present on residues Arg-41, Arg-54, Arg-108, and Arg-185. 2 disordered regions span residues 128–335 (LNSY…SDLL) and 348–374 (YGNASSEHPSNQVPSNNLPEECFSSDE). Positions 160 to 193 (YTQSNYSTEVPNTYRSPGNSPTPMSRWMYSQQDC) are enriched in polar residues. Over residues 255–268 (PWPSAAPSAPSAGS) the composition is skewed to low complexity. Residues 284-295 (PQPPPSPPPQQP) show a composition bias toward pro residues. 2 stretches are compositionally biased toward polar residues: residues 326–335 (AVNNDNSDLL) and 348–365 (YGNASSEHPSNQVPSNNL). Residues 379-456 (SIKKIIHVLE…AILEKLEKKG (78 aa)) form the BAG domain.

As to quaternary structure, binds to the ATPase domain of HSP/HSC70 chaperones. Binds to the death domain of TNFRSF12. Binds to the death domain of TNFRSF1A in the absence of TNF and thereby prevents binding of adapter molecules such as TRADD or TRAF2. Interacts with PRKN.

Its subcellular location is the cytoplasm. Inhibits the chaperone activity of HSP70/HSC70 by promoting substrate release. Prevents constitutive TNFRSF1A signaling. Negative regulator of PRKN translocation to damaged mitochondria. The polypeptide is BAG family molecular chaperone regulator 4 (Bag4) (Mus musculus (Mouse)).